The sequence spans 226 residues: NADH-quinone oxidoreductase subunit B 2 (226 aa).

4 residues coordinate [4Fe-4S] cluster: C37, C38, C103, and C132.

This sequence belongs to the complex I 20 kDa subunit family. As to quaternary structure, NDH-1 is composed of 14 different subunits. Subunits NuoB, C, D, E, F, and G constitute the peripheral sector of the complex. The cofactor is [4Fe-4S] cluster.

The protein localises to the cell membrane. It carries out the reaction a quinone + NADH + 5 H(+)(in) = a quinol + NAD(+) + 4 H(+)(out). NDH-1 shuttles electrons from NADH, via FMN and iron-sulfur (Fe-S) centers, to quinones in the respiratory chain. The immediate electron acceptor for the enzyme in this species is believed to be a menaquinone. Couples the redox reaction to proton translocation (for every two electrons transferred, four hydrogen ions are translocated across the cytoplasmic membrane), and thus conserves the redox energy in a proton gradient. The protein is NADH-quinone oxidoreductase subunit B 2 of Salinispora arenicola (strain CNS-205).